The sequence spans 128 residues: Sulfurtransferase TusD (128 aa).

Catalysis depends on Cys78, which acts as the Cysteine persulfide intermediate.

This sequence belongs to the DsrE/TusD family. As to quaternary structure, heterohexamer, formed by a dimer of trimers. The hexameric TusBCD complex contains 2 copies each of TusB, TusC and TusD. The TusBCD complex interacts with TusE.

It is found in the cytoplasm. Functionally, part of a sulfur-relay system required for 2-thiolation of 5-methylaminomethyl-2-thiouridine (mnm(5)s(2)U) at tRNA wobble positions. Accepts sulfur from TusA and transfers it in turn to TusE. In Escherichia coli O139:H28 (strain E24377A / ETEC), this protein is Sulfurtransferase TusD.